The sequence spans 114 residues: Ribosome-binding factor A (114 aa).

The protein belongs to the RbfA family. In terms of assembly, monomer. Binds 30S ribosomal subunits, but not 50S ribosomal subunits or 70S ribosomes.

The protein localises to the cytoplasm. In terms of biological role, one of several proteins that assist in the late maturation steps of the functional core of the 30S ribosomal subunit. Associates with free 30S ribosomal subunits (but not with 30S subunits that are part of 70S ribosomes or polysomes). Required for efficient processing of 16S rRNA. May interact with the 5'-terminal helix region of 16S rRNA. The sequence is that of Ribosome-binding factor A from Staphylococcus saprophyticus subsp. saprophyticus (strain ATCC 15305 / DSM 20229 / NCIMB 8711 / NCTC 7292 / S-41).